The primary structure comprises 91 residues: C-C motif chemokine 5 (91 aa).

An N-terminal signal peptide occupies residues 1–23 (MKISAAVLTVVLMAASLCAPASA). Intrachain disulfides connect Cys33–Cys57 and Cys34–Cys73.

Belongs to the intercrine beta (chemokine CC) family.

Its subcellular location is the secreted. Chemoattractant for blood monocytes, memory T-helper cells and eosinophils. Causes the release of histamine from basophils and activates eosinophils. May activate several chemokine receptors including CCR1, CCR3, CCR4 and CCR5. May also be an agonist of the G protein-coupled receptor GPR75. Together with GPR75, may play a role in neuron survival through activation of a downstream signaling pathway involving the PI3, Akt and MAP kinases. By activating GPR75 may also play a role in insulin secretion by islet cells. The chain is C-C motif chemokine 5 (CCL5) from Sigmodon hispidus (Hispid cotton rat).